The sequence spans 290 residues: tRNA(Ile)-lysidine synthase (290 aa).

12-17 (SGGSDS) is a binding site for ATP.

This sequence belongs to the tRNA(Ile)-lysidine synthase family.

It localises to the cytoplasm. It catalyses the reaction cytidine(34) in tRNA(Ile2) + L-lysine + ATP = lysidine(34) in tRNA(Ile2) + AMP + diphosphate + H(+). In terms of biological role, ligates lysine onto the cytidine present at position 34 of the AUA codon-specific tRNA(Ile) that contains the anticodon CAU, in an ATP-dependent manner. Cytidine is converted to lysidine, thus changing the amino acid specificity of the tRNA from methionine to isoleucine. The polypeptide is tRNA(Ile)-lysidine synthase (Mycoplasma genitalium (strain ATCC 33530 / DSM 19775 / NCTC 10195 / G37) (Mycoplasmoides genitalium)).